Consider the following 177-residue polypeptide: Dihydrofolate reductase type 9 (177 aa).

The region spanning 3–167 is the DHFR domain; sequence SLNMIVAVNK…TKLIFQIWIN (165 aa).

It belongs to the dihydrofolate reductase family. As to quaternary structure, homodimer.

It catalyses the reaction (6S)-5,6,7,8-tetrahydrofolate + NADP(+) = 7,8-dihydrofolate + NADPH + H(+). Its pathway is cofactor biosynthesis; tetrahydrofolate biosynthesis; 5,6,7,8-tetrahydrofolate from 7,8-dihydrofolate: step 1/1. Key enzyme in folate metabolism. Catalyzes an essential reaction for de novo glycine and purine synthesis, and for DNA precursor synthesis. This is Dihydrofolate reductase type 9 (dhfrIX) from Escherichia coli.